The sequence spans 316 residues: Methionyl-tRNA formyltransferase (316 aa).

(6S)-5,6,7,8-tetrahydrofolate is bound at residue 112–115 (SLLP).

Belongs to the Fmt family.

The catalysed reaction is L-methionyl-tRNA(fMet) + (6R)-10-formyltetrahydrofolate = N-formyl-L-methionyl-tRNA(fMet) + (6S)-5,6,7,8-tetrahydrofolate + H(+). Attaches a formyl group to the free amino group of methionyl-tRNA(fMet). The formyl group appears to play a dual role in the initiator identity of N-formylmethionyl-tRNA by promoting its recognition by IF2 and preventing the misappropriation of this tRNA by the elongation apparatus. The protein is Methionyl-tRNA formyltransferase of Glaesserella parasuis serovar 5 (strain SH0165) (Haemophilus parasuis).